A 74-amino-acid chain; its full sequence is Conotoxin ArMKLT2-041 (74 aa).

An N-terminal signal peptide occupies residues 1-22; sequence MKLTCVLIVAVLFLTACQLIAA. A propeptide spanning residues 23 to 46 is cleaved from the precursor; sequence DDSRDLQKFPRRKMRDGMLNTKNT. Gln-49 is modified (pyrrolidone carboxylic acid). Intrachain disulfides connect Cys-50–Cys-65, Cys-57–Cys-68, and Cys-64–Cys-73.

This sequence belongs to the conotoxin O1 superfamily. Expressed by the venom duct.

Its subcellular location is the secreted. This chain is Conotoxin ArMKLT2-041, found in Conus arenatus (Sand-dusted cone).